The chain runs to 263 residues: uncharacterized protein (263 aa).

17–41 (GGGRGLGAAIALAFAQAGADVLIAS) is a binding site for NAD(+). Residue Ser147 participates in substrate binding. Tyr160 functions as the Proton acceptor in the catalytic mechanism. Residue Lys164 participates in NAD(+) binding.

This sequence belongs to the short-chain dehydrogenases/reductases (SDR) family.

This is an uncharacterized protein from Mycobacterium tuberculosis (strain CDC 1551 / Oshkosh).